The primary structure comprises 371 residues: Putative RNA-binding protein Luc7-like 1 (371 aa).

Coiled-coil stretches lie at residues 87 to 177 (MDHL…RNSM) and 220 to 256 (QIRE…EERL). Residues 232-257 (VAEKQEKRNQDRLRRREEREREERLG) are compositionally biased toward basic and acidic residues. The interval 232 to 371 (VAEKQEKRNQ…RSEEKEAGEI (140 aa)) is disordered. Over residues 258 to 317 (RRSGSRTRDRRRSRSRDRRRRRSRSTSRERRKFSRSRSRDRYRRHRSRSRSHSRGHRRAS) the composition is skewed to basic residues. Composition is skewed to basic and acidic residues over residues 318–351 (RDRS…DWRL) and 361–371 (RRSEEKEAGEI). Phosphoserine occurs at positions 336 and 363.

This sequence belongs to the Luc7 family.

Its function is as follows. May bind to RNA via its Arg/Ser-rich domain. This Mus musculus (Mouse) protein is Putative RNA-binding protein Luc7-like 1 (Luc7l).